Reading from the N-terminus, the 201-residue chain is Ribonuclease HII (201 aa).

One can recognise an RNase H type-2 domain in the interval 14-201 (NLIAGVDEVG…KPVKRILGIE (188 aa)). Aspartate 20, glutamate 21, and aspartate 112 together coordinate a divalent metal cation.

It belongs to the RNase HII family. Mn(2+) serves as cofactor. Requires Mg(2+) as cofactor.

The protein resides in the cytoplasm. It catalyses the reaction Endonucleolytic cleavage to 5'-phosphomonoester.. In terms of biological role, endonuclease that specifically degrades the RNA of RNA-DNA hybrids. The sequence is that of Ribonuclease HII from Photobacterium profundum (strain SS9).